A 1201-amino-acid polypeptide reads, in one-letter code: Potassium/sodium hyperpolarization-activated cyclic nucleotide-gated channel 4 (1201 aa).

At Met1–Phe263 the chain is on the cytoplasmic side. The tract at residues Trp24–Ser183 is disordered. Positions Met26–Gly36 are enriched in acidic residues. Over residues Ser105 to Ser118 the composition is skewed to gly residues. Over residues His121 to Ile132 the composition is skewed to basic and acidic residues. Ser139 is subject to Phosphoserine. Residues Ala164 to Pro174 show a composition bias toward pro residues. Residues Gly209–Asp260 form an involved in subunit assembly region. A helical transmembrane segment spans residues Tyr264–Phe286. The Extracellular segment spans residues Phe287–Thr293. Residues Pro294–Phe314 traverse the membrane as a helical segment. The Cytoplasmic portion of the chain corresponds to Arg315–Lys336. Residues Tyr337–Val359 form a helical membrane-spanning segment. Over Glu360–Arg378 the chain is Extracellular. The chain crosses the membrane as a helical; Voltage-sensor span at residues Phe379–His399. The Cytoplasmic segment spans residues Gln400–Ser413. Residues Ala414–Gln436 traverse the membrane as a helical segment. Residues Phe437–Gln464 lie on the Extracellular side of the membrane. N-linked (GlcNAc...) asparagine glycosylation occurs at Asn458. Positions Tyr465–Pro486 form an intramembrane region, pore-forming. Over Val487–Asp491 the chain is Extracellular. A helical transmembrane segment spans residues Val492–Ile517. Topologically, residues Gln518 to Leu1201 are cytoplasmic. Residues Tyr559, Lys562, Phe564, and Glu566 each contribute to the 3',5'-cyclic GMP site. 3',5'-cyclic AMP is bound by residues Gly659, Glu660, Cys662, Arg669, Thr670, Val673, and Arg710. Disordered stretches follow at residues Ala804–Ala902 and Ala914–Leu1201. 2 stretches are compositionally biased toward low complexity: residues Ser831–Ser856 and Ser866–Ser880. Pro residues predominate over residues Ser881 to Thr894. 2 stretches are compositionally biased toward low complexity: residues Leu915–Ala939 and Arg967–Pro995. The span at Gly1029 to Pro1042 shows a compositional bias: pro residues. The segment covering Ala1045–Pro1056 has biased composition (low complexity). A phosphoserine mark is found at Ser1105 and Ser1108. Over residues Ala1122–Pro1134 the composition is skewed to gly residues.

It belongs to the potassium channel HCN family. As to quaternary structure, homotetramer. The potassium channel is composed of a homo- or heterotetrameric complex of pore-forming subunits. Interacts with PEX5L with a 4:4 HCN4:PEX5L stoichiometry; reduces the effects of cAMP on the voltage-dependence and rate of activation. Interacts with IRAG1; regulates HCN4 channel activity. Interacts with IRAG2; regulates HCN4 channel activity. S-palmitoylated. Detected in a subset of elongated cells in taste buds.

The protein localises to the cell membrane. The enzyme catalyses K(+)(in) = K(+)(out). It catalyses the reaction Na(+)(in) = Na(+)(out). Its activity is regulated as follows. Activated by cAMP, and to a lesser extent by cGMP and cCMP. cAMP binding causes a conformation change that leads to the assembly of an active tetramer and channel opening. Binding of cAMP removes a tonic inhibition conferred by cyclic nucleotide-binding domain (CNBD) on channel opening. Cyclic dinucleotides can modulate HCN4 channel; cyclic dinucleotides acting as potent antagonists of cAMP. Inhibited by extracellular Cs(+) ions. Auxiliary subunits can also regulate HCN4 channel. IRAG1 causes a gain-of-function by shifting HCN4 activation to more depolarized membrane potentials in the absence of cAMP. In contrast, IRAG2 causes a loss-of-function by inhibiting cAMP-dependent potentiation of HCN4 activation. Its function is as follows. Hyperpolarization-activated ion channel that are permeable to Na(+) and K(+) ions with very slow activation and inactivation. Exhibits higher selectivity for K(+) over Na(+) ions. Contributes to the native pacemaker currents in heart (If) that regulate the rhythm of heart beat. Contributes to the native pacemaker currents in neurons (Ih). May mediate responses to sour stimuli. This Mus musculus (Mouse) protein is Potassium/sodium hyperpolarization-activated cyclic nucleotide-gated channel 4 (Hcn4).